Consider the following 691-residue polypeptide: Elongation factor G (691 aa).

Residues 8–282 (ERVRNIGIAA…AVVDYLPAPI (275 aa)) enclose the tr-type G domain. GTP is bound by residues 17 to 24 (AHIDAGKT), 81 to 85 (DTPGH), and 135 to 138 (NKMD).

Belongs to the TRAFAC class translation factor GTPase superfamily. Classic translation factor GTPase family. EF-G/EF-2 subfamily.

Its subcellular location is the cytoplasm. Its function is as follows. Catalyzes the GTP-dependent ribosomal translocation step during translation elongation. During this step, the ribosome changes from the pre-translocational (PRE) to the post-translocational (POST) state as the newly formed A-site-bound peptidyl-tRNA and P-site-bound deacylated tRNA move to the P and E sites, respectively. Catalyzes the coordinated movement of the two tRNA molecules, the mRNA and conformational changes in the ribosome. The polypeptide is Elongation factor G (Synechococcus sp. (strain WH7803)).